The chain runs to 809 residues: Leucine--tRNA ligase (809 aa).

Positions 40 to 50 (PYPSGRIHMGH) match the 'HIGH' region motif. Residues 579-583 (KMSKS) carry the 'KMSKS' region motif. Residue Lys-582 coordinates ATP.

Belongs to the class-I aminoacyl-tRNA synthetase family.

Its subcellular location is the cytoplasm. It catalyses the reaction tRNA(Leu) + L-leucine + ATP = L-leucyl-tRNA(Leu) + AMP + diphosphate. The chain is Leucine--tRNA ligase from Campylobacter jejuni subsp. doylei (strain ATCC BAA-1458 / RM4099 / 269.97).